A 449-amino-acid chain; its full sequence is Rubisco accumulation factor 1.2, chloroplastic (449 aa).

The N-terminal 61 residues, Met-1–Arg-61, are a transit peptide targeting the chloroplast. The segment at Ile-75–Leu-264 is N-terminal alpha-helix. Residues Thr-262–Ile-288 adopt a coiled-coil conformation. The C-terminal beta sheet stretch occupies residues Ile-288–Pro-434.

The protein belongs to the RAF family. As to quaternary structure, homodimer.

Its subcellular location is the plastid. It localises to the chloroplast. Required for assembly or stability of RuBisCO. Acts at a postchaperonin step to fold and/or assemble the large subunit (rbcL) into RuBisCO. RAF1 brackets an rbcL dimer (rbcL(2)), leading to rbcL(8)-RAF1(4) complex formation. In the next step, RBCS displaces RAF1, thus resulting in holoenzyme formation. This chain is Rubisco accumulation factor 1.2, chloroplastic, found in Arabidopsis thaliana (Mouse-ear cress).